Consider the following 425-residue polypeptide: Receptor-like protein 55 (425 aa).

The signal sequence occupies residues 1–25 (MKPQQPQPPLLLLLLLPLLLTTVSS). Residues 26 to 397 (YPLNPKQLKA…EEEHKGSNKT (372 aa)) lie on the Extracellular side of the membrane. 4 N-linked (GlcNAc...) asparagine glycosylation sites follow: N40, N54, N79, and N132. 7 LRR repeats span residues 144–169 (LKNL…ILGN), 170–193 (MHKL…SFHS), 195–216 (LRYI…ITRL), 217–240 (KNLK…IKSL), 242–264 (FLKN…LSSI), 265–287 (SELT…FFSE), and 288–313 (MKNL…SFIK). N-linked (GlcNAc...) asparagine glycosylation is found at N182, N202, N223, N245, N278, N308, and N329. A disordered region spans residues 355–389 (PSQKEESLSGENDYDVEGGNEEKTENLKTKEEEEE). A compositionally biased stretch (basic and acidic residues) spans 374 to 389 (NEEKTENLKTKEEEEE). The N-linked (GlcNAc...) asparagine glycan is linked to N395. A helical membrane pass occupies residues 398 to 418 (LFGLGIGLFSLVFLILFLFYL). Residues 419 to 425 (AKRCRLI) lie on the Cytoplasmic side of the membrane.

Belongs to the RLP family.

It is found in the cell membrane. In terms of biological role, involved in plant defense. This chain is Receptor-like protein 55, found in Arabidopsis thaliana (Mouse-ear cress).